The sequence spans 961 residues: Rho guanine nucleotide exchange factor 2 (961 aa).

The Phorbol-ester/DAG-type zinc-finger motif lies at 12-59 (GHLFTTISVSGMTMCYACNKSITAKEALICPTCNVTIHNRCKDTLANC). Phosphoserine is present on residues Ser-82, Ser-95, Ser-102, Ser-106, Ser-110, Ser-124, Ser-136, Ser-145, Ser-147, and Ser-150. Residues 104–134 (RQSLLGSRRGRSPLSLAKSVSTTNIAGHFND) form an interaction with DYNLT1 region. Residues 209-406 (KQQDVIYELI…KELLSNVDQD (198 aa)) form the DH domain. Position 327 is an N6-acetyllysine (Lys-327). The PH domain maps to 446–545 (KLIHDGCLLW…WIRVIQQSVR (100 aa)). The stretch at 561–588 (EAYLRRIKMELQQKDRALVELLQEKVGL) forms a coiled coil. A phosphoserine mark is found at Ser-619 and Ser-622. Position 653 is a phosphothreonine; by MAPK1 or MAPK3 (Thr-653). Positions 659 to 679 (LPVETDSGGNTSPGVTANGEA) are disordered. 4 positions are modified to phosphoserine: Ser-665, Ser-670, Ser-685, and Ser-756. Over residues 742-761 (PEGPERREKLTRANSRDGEA) the composition is skewed to basic and acidic residues. The segment at 742–770 (PEGPERREKLTRANSRDGEAGRAGAAPVA) is disordered. Residues 772–841 (EKQATELALL…RQLAALGHTE (70 aa)) are a coiled coil. Ser-860 carries the post-translational modification Phosphoserine; by PAK1 and AURKA. Residues 867-961 (LYLSFTPPQP…RDGEPVASES (95 aa)) form a disordered region. The residue at position 868 (Tyr-868) is a Phosphotyrosine. Ser-870 carries the post-translational modification Phosphoserine; by PAK4. Residues 894-913 (RPFEDRERQELGSPDERLQD) show a composition bias toward basic and acidic residues. Ser-906, Ser-914, and Ser-915 each carry phosphoserine. A compositionally biased stretch (acidic residues) spans 915-925 (SDPDTGSEEEG). A Phosphothreonine modification is found at Thr-919. A phosphoserine mark is found at Ser-921, Ser-927, Ser-928, and Ser-931. The residue at position 935 (Ser-935) is a Phosphoserine; by CDK1.

In terms of assembly, found in a complex composed at least of ARHGEF2, NOD2 and RIPK2. Interacts with RIPK2; the interaction mediates tyrosine phosphorylation of RIPK2 by Src kinase CSK. Interacts with RIPK1 and RIPK3. Interacts with YWHAZ/14-3-3 zeta; when phosphorylated at Ser-860. Interacts with the kinases PAK4, AURKA and MAPK1. Interacts with RHOA and RAC1. Interacts with NOD1. Interacts (via the N- terminal zinc finger) with CAPN6 (via domain II). Interacts with DYNLT1. In terms of processing, phosphorylation of Ser-860 by PAK1 induces binding to protein YWHAZ, promoting its relocation to microtubules and the inhibition of its activity. Phosphorylated by AURKA and CDK1 during mitosis, which negatively regulates its activity. Phosphorylation by MAPK1 or MAPK3 increases nucleotide exchange activity. Phosphorylation by PAK4 releases GEF-H1 from the microtubules. Phosphorylated on serine, threonine and tyrosine residues in a RIPK2-dependent manner.

The protein resides in the cytoplasm. Its subcellular location is the cytoskeleton. It is found in the cell junction. The protein localises to the tight junction. It localises to the golgi apparatus. The protein resides in the spindle. Its subcellular location is the cytoplasmic vesicle. Activates Rho-GTPases by promoting the exchange of GDP for GTP. May be involved in epithelial barrier permeability, cell motility and polarization, dendritic spine morphology, antigen presentation, leukemic cell differentiation, cell cycle regulation, innate immune response, and cancer. Binds Rac-GTPases, but does not seem to promote nucleotide exchange activity toward Rac-GTPases. May stimulate instead the cortical activity of Rac. Inactive toward CDC42, TC10, or Ras-GTPases. Forms an intracellular sensing system along with NOD1 for the detection of microbial effectors during cell invasion by pathogens. Involved in innate immune signaling transduction pathway promoting cytokine IL6/interleukin-6 and TNF-alpha secretion in macrophage upon stimulation by bacterial peptidoglycans; acts as a signaling intermediate between NOD2 receptor and RIPK2 kinase. Contributes to the tyrosine phosphorylation of RIPK2 through Src tyrosine kinase leading to NF-kappaB activation by NOD2. Overexpression activates Rho-, but not Rac-GTPases, and increases paracellular permeability. Involved in neuronal progenitor cell division and differentiation. Involved in the migration of precerebellar neurons. The polypeptide is Rho guanine nucleotide exchange factor 2 (ARHGEF2) (Sus scrofa (Pig)).